The sequence spans 275 residues: Large ribosomal subunit protein uL2c (275 aa).

Residues 219–255 (TVRGSVMNPCDHPHGGGEGRAPIGRTRPLTPWGKPAL) are disordered.

It belongs to the universal ribosomal protein uL2 family. In terms of assembly, part of the 50S ribosomal subunit.

It localises to the plastid. It is found in the chloroplast. The chain is Large ribosomal subunit protein uL2c (rpl2) from Trieres chinensis (Marine centric diatom).